The chain runs to 277 residues: Large ribosomal subunit protein uL2c (277 aa).

The segment at 224 to 257 is disordered; that stretch reads VMNPIDHPHGGGEGRAPIGRKKPLTPWGHPALGR.

This sequence belongs to the universal ribosomal protein uL2 family. Part of the 50S ribosomal subunit.

The protein localises to the plastid. It is found in the chloroplast. The polypeptide is Large ribosomal subunit protein uL2c (rpl2) (Anthoceros angustus (Hornwort)).